A 672-amino-acid chain; its full sequence is DNA ligase (672 aa).

NAD(+) is bound by residues 35–39 (DAQYD), 84–85 (SL), and Glu115. The N6-AMP-lysine intermediate role is filled by Lys117. NAD(+) contacts are provided by Arg138, Glu178, Lys294, and Lys318. Zn(2+)-binding residues include Cys412, Cys415, Cys430, and Cys435. A BRCT domain is found at 592-672 (ATGGPFVGKS…AFLQMLQTNA (81 aa)).

The protein belongs to the NAD-dependent DNA ligase family. LigA subfamily. It depends on Mg(2+) as a cofactor. Requires Mn(2+) as cofactor.

It carries out the reaction NAD(+) + (deoxyribonucleotide)n-3'-hydroxyl + 5'-phospho-(deoxyribonucleotide)m = (deoxyribonucleotide)n+m + AMP + beta-nicotinamide D-nucleotide.. Functionally, DNA ligase that catalyzes the formation of phosphodiester linkages between 5'-phosphoryl and 3'-hydroxyl groups in double-stranded DNA using NAD as a coenzyme and as the energy source for the reaction. It is essential for DNA replication and repair of damaged DNA. The protein is DNA ligase of Myxococcus xanthus (strain DK1622).